The chain runs to 240 residues: Proteasome subunit beta 1 (240 aa).

The propeptide at 1–46 is removed in mature form; by autocatalysis; it reads MRDMTPGPDLSGPQAADEFQSDPYAPEVGELPEQSAQDSEKVNKTG. Positions 1 to 48 are disordered; sequence MRDMTPGPDLSGPQAADEFQSDPYAPEVGELPEQSAQDSEKVNKTGTT. Residue T47 is the Nucleophile of the active site.

Belongs to the peptidase T1B family. As to quaternary structure, the 20S proteasome core is composed of 14 alpha and 14 beta subunits that assemble into four stacked heptameric rings, resulting in a barrel-shaped structure. The two inner rings, each composed of seven catalytic beta subunits, are sandwiched by two outer rings, each composed of seven alpha subunits. The catalytic chamber with the active sites is on the inside of the barrel. Has a gated structure, the ends of the cylinder being occluded by the N-termini of the alpha-subunits. Is capped at one or both ends by the proteasome regulatory ATPase, PAN.

Its subcellular location is the cytoplasm. It carries out the reaction Cleavage of peptide bonds with very broad specificity.. Its activity is regulated as follows. The formation of the proteasomal ATPase PAN-20S proteasome complex, via the docking of the C-termini of PAN into the intersubunit pockets in the alpha-rings, triggers opening of the gate for substrate entry. Interconversion between the open-gate and close-gate conformations leads to a dynamic regulation of the 20S proteasome proteolysis activity. Component of the proteasome core, a large protease complex with broad specificity involved in protein degradation. This Haloarcula marismortui (strain ATCC 43049 / DSM 3752 / JCM 8966 / VKM B-1809) (Halobacterium marismortui) protein is Proteasome subunit beta 1.